The primary structure comprises 1140 residues: uncharacterized protein (1140 aa).

7 disordered regions span residues 1–49 (MGSS…TSPE), 97–243 (SSDI…STIS), 280–427 (TSSS…KSSV), 512–541 (ASST…DLSK), 702–747 (FSTP…STAS), 916–1059 (CPEK…PIGR), and 1080–1103 (LSSS…GTSS). Residues 105-129 (VNDVESSTSGPSNSYSALSSTNAQL) are compositionally biased toward polar residues. Low complexity-rich tracts occupy residues 130–154 (SSST…TSSS), 172–214 (TTAS…TTSD), and 221–243 (SSST…STIS). The span at 516–528 (LGSKVSSSNSRMA) shows a compositional bias: polar residues. 2 stretches are compositionally biased toward low complexity: residues 529–541 (TSKT…DLSK) and 703–718 (STPE…VTSE). Polar residues predominate over residues 719–733 (APSTVSSMTTSAPFI). The segment covering 734–747 (NNSTSARPSPSTAS) has biased composition (low complexity). Positions 949–961 (SFKDMKTSQETKK) are enriched in basic and acidic residues. Residues 977-997 (EKTSPTTKASPSTSPSESKAA) are compositionally biased toward low complexity. Composition is skewed to polar residues over residues 998-1023 (GNTS…STSV), 1031-1055 (TKNS…STES), and 1089-1103 (RSTT…GTSS).

This is an uncharacterized protein from Saccharomyces cerevisiae (strain ATCC 204508 / S288c) (Baker's yeast).